A 248-amino-acid chain; its full sequence is 5'-nucleotidase SurE (248 aa).

A divalent metal cation is bound by residues Asp-8, Asp-9, Ser-39, and Asn-91.

This sequence belongs to the SurE nucleotidase family. It depends on a divalent metal cation as a cofactor.

Its subcellular location is the cytoplasm. It catalyses the reaction a ribonucleoside 5'-phosphate + H2O = a ribonucleoside + phosphate. In terms of biological role, nucleotidase that shows phosphatase activity on nucleoside 5'-monophosphates. The protein is 5'-nucleotidase SurE of Shewanella amazonensis (strain ATCC BAA-1098 / SB2B).